The sequence spans 263 residues: uncharacterized protein (263 aa).

The N-terminal stretch at 1–22 (MEYLKRLALFISVIILTIFIMG) is a signal peptide. The N-palmitoyl cysteine moiety is linked to residue Cys23. Cys23 carries S-diacylglycerol cysteine lipidation.

It belongs to the staphylococcal tandem lipoprotein family.

The protein resides in the cell membrane. This is an uncharacterized protein from Staphylococcus aureus (strain MSSA476).